The sequence spans 187 residues: MTEEIDFILESTEESMNGSIAHLEKEFLNIRAGKASPAMLGGVFVDYYGSATPLSQVSKISVPDARTITLQPFEKNMLQAIEKAILIANIGFNPMNNGDVIIISVPPLTEERRRDLAKQAKSEAEDAKIGIRNVRKDANTDIKKLEKEGTSEDICKSAEEEVQNLTNTYIKKIDELLAAKEAEIMKV.

The protein belongs to the RRF family.

It is found in the cytoplasm. Functionally, responsible for the release of ribosomes from messenger RNA at the termination of protein biosynthesis. May increase the efficiency of translation by recycling ribosomes from one round of translation to another. This is Ribosome-recycling factor from Flavobacterium johnsoniae (strain ATCC 17061 / DSM 2064 / JCM 8514 / BCRC 14874 / CCUG 350202 / NBRC 14942 / NCIMB 11054 / UW101) (Cytophaga johnsonae).